Consider the following 105-residue polypeptide: UPF0145 protein OEOE_0637 (105 aa).

It belongs to the UPF0145 family.

The protein is UPF0145 protein OEOE_0637 of Oenococcus oeni (strain ATCC BAA-331 / PSU-1).